Reading from the N-terminus, the 398-residue chain is MQYVREMSSDLATFASGLLALFERSAGVPLRELALVGLTAAIITYFATGLVGVLANRLEAVAYPRERDVHVTPTPRMGGLAMYLGVLAAVFLASQLPALTRGFVYSSGMPAVLVAGAVITGIGLIDDRWGLDALTKFAGQITAASVLVTMGVAWSVLYIPLGGVGTIVLDQTSSILLTLALTVSIVNAINFVDGLDGLAAGLGLITAMAICIFSVGLLRDHDGDVLFYPPAVISVVLAGSCLGFLPHNFHRAKIFMGDSGSMLVGLMLAAASTTAAGPISQNAYGTRDVFALLSPFLLVVAVMFVPMLDLLLAIVRRIRAGRSAFSPDKMHLHHRLLQIGHSHRRVVLLIYLWVGIVAFGAASTIFFNPRNTGAVMLGAIVITGMATVIPLLRRRDNY.

Helical transmembrane passes span 33–53, 79–99, 105–125, 148–168, 175–195, 198–218, 225–245, 260–280, 295–315, 347–367, and 372–392; these read LALV…LVGV, GLAM…LPAL, YSSG…IGLI, VTMG…GTIV, ILLT…VDGL, LAAG…VGLL, VLFY…LGFL, GSML…GPIS, PFLL…LAIV, VLLI…TIFF, and TGAV…IPLL.

It belongs to the glycosyltransferase 4 family. WecA subfamily. The cofactor is Mg(2+). It depends on Mn(2+) as a cofactor.

Its subcellular location is the cell membrane. The enzyme catalyses trans,octa-cis-decaprenyl phosphate + UDP-N-acetyl-alpha-D-glucosamine = N-acetyl-alpha-D-glucosaminyl-1-diphospho-trans,octa-cis-decaprenol + UMP. The protein operates within cell wall biogenesis; cell wall polysaccharide biosynthesis. Its function is as follows. Involved in the biosynthesis of the disaccharide D-N-acetylglucosamine-L-rhamnose which plays an important role in the mycobacterial cell wall as a linker connecting arabinogalactan and peptidoglycan via a phosphodiester linkage. Catalyzes the transfer of the N-acetylglucosamine-1-phosphate (GlcNAc-1P) moiety from UDP-GlcNAc onto the carrier lipid decaprenyl phosphate (C50-P), yielding GlcNAc-pyrophosphoryl-decaprenyl (GlcNAc-PP-C50). This Mycobacterium leprae (strain TN) protein is Decaprenyl-phosphate N-acetylglucosaminephosphotransferase (wecA).